Reading from the N-terminus, the 254-residue chain is Phosphate import ATP-binding protein PstB (254 aa).

The ABC transporter domain occupies 7–249; the sequence is MVAESMSFYY…PREKQTEDYI (243 aa). 39–46 is an ATP binding site; that stretch reads GPSGCGKS.

Belongs to the ABC transporter superfamily. Phosphate importer (TC 3.A.1.7) family. The complex is composed of two ATP-binding proteins (PstB), two transmembrane proteins (PstC and PstA) and a solute-binding protein (PstS).

The protein resides in the cell inner membrane. It catalyses the reaction phosphate(out) + ATP + H2O = ADP + 2 phosphate(in) + H(+). In terms of biological role, part of the ABC transporter complex PstSACB involved in phosphate import. Responsible for energy coupling to the transport system. The chain is Phosphate import ATP-binding protein PstB from Chlorobium chlorochromatii (strain CaD3).